Reading from the N-terminus, the 562-residue chain is Formate--tetrahydrofolate ligase (562 aa).

Thr70–Ser77 is an ATP binding site.

This sequence belongs to the formate--tetrahydrofolate ligase family.

It carries out the reaction (6S)-5,6,7,8-tetrahydrofolate + formate + ATP = (6R)-10-formyltetrahydrofolate + ADP + phosphate. It functions in the pathway one-carbon metabolism; tetrahydrofolate interconversion. In Paenarthrobacter aurescens (strain TC1), this protein is Formate--tetrahydrofolate ligase.